A 290-amino-acid chain; its full sequence is Probable adenylate kinase 2, chloroplastic (290 aa).

Residues 1–10 are compositionally biased toward low complexity; it reads MASSMAATAT. A disordered region spans residues 1–37; that stretch reads MASSMAATATLSPPVLSAERPTVRGGLFLPPSPATSR. A chloroplast-targeting transit peptide spans 1 to 61; that stretch reads MASSMAATAT…ATRKPRSLPR (61 aa). 83-88 serves as a coordination point for ATP; that stretch reads ASGKGT. The NMP stretch occupies residues 103 to 132; the sequence is SAGDLLRAEIAAGSENGKRAKEFMEKGQLV. Residues Arg109, 130–132, 159–162, and Gln166 each bind AMP; these read QLV and GYPR. ATP-binding positions include Arg193, Arg197, and 206-207; that span reads IY. Residues 196–229 are LID; that stretch reads GRRLDPVTGKIYHLKYSPPENEEIASRLTQRFDD. The AMP site is built by Arg226 and Arg237.

The protein belongs to the adenylate kinase family.

It is found in the plastid. The protein resides in the chloroplast. The enzyme catalyses AMP + ATP = 2 ADP. Functionally, catalyzes the reversible transfer of the terminal phosphate group between ATP and AMP. Plays an important role in cellular energy homeostasis and in adenine nucleotide metabolism. In Oryza sativa subsp. japonica (Rice), this protein is Probable adenylate kinase 2, chloroplastic.